The primary structure comprises 206 residues: Shieldin complex subunit 1 (206 aa).

Composition is skewed to polar residues over residues Met1–Ser15, Arg33–Phe43, and Asp60–Asn69. Disordered stretches follow at residues Met1–Pro21 and Arg33–Asn69.

As to quaternary structure, component of the shieldin complex, consisting of SHLD1, SHLD2, SHLD3 and MAD2L2/REV7. Within the complex, SHLD2 forms a scaffold which interacts with a SHLD3-MAD2L2 subcomplex via its N-terminus, and with SHLD1 via its C-terminus. Interacts with ASTE1.

The protein localises to the chromosome. Component of the shieldin complex, which plays an important role in repair of DNA double-stranded breaks (DSBs). During G1 and S phase of the cell cycle, the complex functions downstream of TP53BP1 to promote non-homologous end joining (NHEJ) and suppress DNA end resection. Mediates various NHEJ-dependent processes including immunoglobulin class-switch recombination, and fusion of unprotected telomeres. This chain is Shieldin complex subunit 1, found in Bos taurus (Bovine).